The chain runs to 234 residues: DNA repair protein RecO (234 aa).

It belongs to the RecO family.

Functionally, involved in DNA repair and RecF pathway recombination. This Coxiella burnetii (strain RSA 331 / Henzerling II) protein is DNA repair protein RecO.